Consider the following 134-residue polypeptide: ATP synthase epsilon chain (134 aa).

Belongs to the ATPase epsilon chain family. F-type ATPases have 2 components, CF(1) - the catalytic core - and CF(0) - the membrane proton channel. CF(1) has five subunits: alpha(3), beta(3), gamma(1), delta(1), epsilon(1). CF(0) has three main subunits: a, b and c.

It localises to the cell membrane. Its function is as follows. Produces ATP from ADP in the presence of a proton gradient across the membrane. The sequence is that of ATP synthase epsilon chain from Clostridium botulinum (strain Alaska E43 / Type E3).